An 878-amino-acid chain; its full sequence is Alanine--tRNA ligase (878 aa).

Zn(2+)-binding residues include histidine 562, histidine 566, cysteine 670, and histidine 674.

This sequence belongs to the class-II aminoacyl-tRNA synthetase family. Zn(2+) is required as a cofactor.

Its subcellular location is the cytoplasm. The enzyme catalyses tRNA(Ala) + L-alanine + ATP = L-alanyl-tRNA(Ala) + AMP + diphosphate. Catalyzes the attachment of alanine to tRNA(Ala) in a two-step reaction: alanine is first activated by ATP to form Ala-AMP and then transferred to the acceptor end of tRNA(Ala). Also edits incorrectly charged Ser-tRNA(Ala) and Gly-tRNA(Ala) via its editing domain. This chain is Alanine--tRNA ligase, found in Acinetobacter baylyi (strain ATCC 33305 / BD413 / ADP1).